The sequence spans 361 residues: Putative agmatine deiminase (361 aa).

Cys354 serves as the catalytic Amidino-cysteine intermediate.

Belongs to the agmatine deiminase family.

It carries out the reaction agmatine + H2O = N-carbamoylputrescine + NH4(+). This chain is Putative agmatine deiminase, found in Streptococcus pneumoniae (strain ATCC 700669 / Spain 23F-1).